The sequence spans 319 residues: Acetyl-coenzyme A carboxylase carboxyl transferase subunit alpha (319 aa).

The 258-residue stretch at 36-293 (EVERLKTKLE…HDAFLSELDR (258 aa)) folds into the CoA carboxyltransferase C-terminal domain.

This sequence belongs to the AccA family. In terms of assembly, acetyl-CoA carboxylase is a heterohexamer composed of biotin carboxyl carrier protein (AccB), biotin carboxylase (AccC) and two subunits each of ACCase subunit alpha (AccA) and ACCase subunit beta (AccD).

It is found in the cytoplasm. It catalyses the reaction N(6)-carboxybiotinyl-L-lysyl-[protein] + acetyl-CoA = N(6)-biotinyl-L-lysyl-[protein] + malonyl-CoA. The protein operates within lipid metabolism; malonyl-CoA biosynthesis; malonyl-CoA from acetyl-CoA: step 1/1. Functionally, component of the acetyl coenzyme A carboxylase (ACC) complex. First, biotin carboxylase catalyzes the carboxylation of biotin on its carrier protein (BCCP) and then the CO(2) group is transferred by the carboxyltransferase to acetyl-CoA to form malonyl-CoA. The protein is Acetyl-coenzyme A carboxylase carboxyl transferase subunit alpha of Dichelobacter nodosus (strain VCS1703A).